A 344-amino-acid polypeptide reads, in one-letter code: MILKPENEKKLIIDVLKKFGVPEEDAKITADVFVDADLKGFTSHGIGRFPQYITALKLGNINPKPDIKIVKESPATAVIDGDLGLGQVVGKKAMELAIKKAKNVGVGVVATRNANHFGIAGYYSELAMNQDMIGITITNTEPAMAPFGGKEKILGTNPIAIAFKGNKYKFSLDMATASIARGKILEALRKKIKIPEGCAVDKDGKPTTDPAKALEGCILPFGGPKGYGLALAIEMLSAIGGAEVGTKVKGTANPEERCTKGDLFIAINPEFFMGKEEFKRKVDELLDEIKNSEPAEGFEILIPGEIEERNKMKRKDGFEIDKNLYNQLKEICNELGLNIEDYIE.

It belongs to the LDH2/MDH2 oxidoreductase family.

It is found in the cytoplasm. The enzyme catalyses a (2S)-2-hydroxycarboxylate + NAD(+) = a 2-oxocarboxylate + NADH + H(+). It participates in cofactor biosynthesis; coenzyme M biosynthesis; sulfoacetaldehyde from phosphoenolpyruvate and sulfite: step 3/4. The protein operates within cofactor biosynthesis; 5,6,7,8-tetrahydromethanopterin biosynthesis. In terms of biological role, catalyzes the reduction of sulfopyruvate to (R)-sulfolactate much more efficiently than the reverse reaction. Also catalyzes the reduction of oxaloacetate, alpha-ketoglutarate, and to a much lower extent, KHTCA, but not pyruvate. Involved in the biosynthesis of both coenzyme M (with (R)-sulfolactate) and methanopterin (with alpha-ketoglutarate). The sequence is that of L-sulfolactate dehydrogenase (comC) from Methanocaldococcus jannaschii (strain ATCC 43067 / DSM 2661 / JAL-1 / JCM 10045 / NBRC 100440) (Methanococcus jannaschii).